Reading from the N-terminus, the 116-residue chain is Ribosome-binding factor A (116 aa).

Belongs to the RbfA family. In terms of assembly, monomer. Binds 30S ribosomal subunits, but not 50S ribosomal subunits or 70S ribosomes.

It localises to the cytoplasm. One of several proteins that assist in the late maturation steps of the functional core of the 30S ribosomal subunit. Associates with free 30S ribosomal subunits (but not with 30S subunits that are part of 70S ribosomes or polysomes). Required for efficient processing of 16S rRNA. May interact with the 5'-terminal helix region of 16S rRNA. The polypeptide is Ribosome-binding factor A (Pediococcus pentosaceus (strain ATCC 25745 / CCUG 21536 / LMG 10740 / 183-1w)).